Consider the following 515-residue polypeptide: uncharacterized protein (515 aa).

A run of 3 helical transmembrane segments spans residues 1 to 21 (MSFV…LAGI), 165 to 185 (IGGP…GLLF), and 199 to 219 (GPVG…GLFG). The 93-residue stretch at 1–93 (MSFVVAAPEV…AGAYAGAEAA (93 aa)) folds into the PE domain. The segment covering 349 to 360 (GGTLIGNGGDGG) has biased composition (gly residues). Disordered regions lie at residues 349 to 368 (GGTL…TDGF) and 463 to 515 (GVSG…SPGG).

This sequence belongs to the mycobacterial PE family. PGRS subfamily.

It localises to the cell membrane. This is an uncharacterized protein from Mycobacterium tuberculosis (strain CDC 1551 / Oshkosh).